The sequence spans 335 residues: Cathepsin B (335 aa).

A signal peptide spans 1 to 17; that stretch reads MWRLLATLSCLVLLTSA. Positions 18-79 are cleaved as a propeptide — activation peptide; that stretch reads RESLHFQPLS…QRAAFAADMI (62 aa). 6 cysteine pairs are disulfide-bonded: Cys-93–Cys-122, Cys-105–Cys-150, Cys-141–Cys-207, Cys-142–Cys-146, Cys-179–Cys-211, and Cys-187–Cys-198. The active site involves Cys-108. Residue Asn-192 is glycosylated (N-linked (GlcNAc...) asparagine). Lys-220 is modified (N6-acetyllysine). Cys-227 and Cys-331 are joined by a disulfide. Active-site residues include His-278 and Asn-298. Residues 333 to 335 constitute a propeptide that is removed on maturation; that stretch reads PHF.

Belongs to the peptidase C1 family. Dimer of a heavy chain and a light chain cross-linked by a disulfide bond. Interacts with SRPX2. Directly interacts with SHKBP1. As to expression, expressed in heart (at protein level).

Its subcellular location is the lysosome. It is found in the melanosome. It localises to the secreted. The protein localises to the extracellular space. The protein resides in the apical cell membrane. It catalyses the reaction Hydrolysis of proteins with broad specificity for peptide bonds. Preferentially cleaves -Arg-Arg-|-Xaa bonds in small molecule substrates (thus differing from cathepsin L). In addition to being an endopeptidase, shows peptidyl-dipeptidase activity, liberating C-terminal dipeptides.. Thiol protease which is believed to participate in intracellular degradation and turnover of proteins. Cleaves matrix extracellular phosphoglycoprotein MEPE. Involved in the solubilization of cross-linked TG/thyroglobulin in the thyroid follicle lumen. Has also been implicated in tumor invasion and metastasis. The chain is Cathepsin B (CTSB) from Sus scrofa (Pig).